The chain runs to 263 residues: Endonuclease 8 (263 aa).

P2 acts as the Schiff-base intermediate with DNA in catalysis. E3 (proton donor) is an active-site residue. The active-site Proton donor; for beta-elimination activity is K53. DNA-binding residues include Q70, R125, and N169. The FPG-type zinc finger occupies 229–263 (KVFHRDGELCERCGGIIEKTTLSSRPFYWCPGCQH). R253 acts as the Proton donor; for delta-elimination activity in catalysis.

Belongs to the FPG family. It depends on Zn(2+) as a cofactor.

The enzyme catalyses 2'-deoxyribonucleotide-(2'-deoxyribose 5'-phosphate)-2'-deoxyribonucleotide-DNA = a 3'-end 2'-deoxyribonucleotide-(2,3-dehydro-2,3-deoxyribose 5'-phosphate)-DNA + a 5'-end 5'-phospho-2'-deoxyribonucleoside-DNA + H(+). Its function is as follows. Involved in base excision repair of DNA damaged by oxidation or by mutagenic agents. Acts as a DNA glycosylase that recognizes and removes damaged bases. Has a preference for oxidized pyrimidines, such as thymine glycol, 5,6-dihydrouracil and 5,6-dihydrothymine. Has AP (apurinic/apyrimidinic) lyase activity and introduces nicks in the DNA strand. Cleaves the DNA backbone by beta-delta elimination to generate a single-strand break at the site of the removed base with both 3'- and 5'-phosphates. The sequence is that of Endonuclease 8 from Shigella dysenteriae serotype 1 (strain Sd197).